Consider the following 288-residue polypeptide: Bifunctional protein FolD (288 aa).

Residues 164-166 (GTS) and I230 each bind NADP(+).

Belongs to the tetrahydrofolate dehydrogenase/cyclohydrolase family. As to quaternary structure, homodimer.

It carries out the reaction (6R)-5,10-methylene-5,6,7,8-tetrahydrofolate + NADP(+) = (6R)-5,10-methenyltetrahydrofolate + NADPH. The enzyme catalyses (6R)-5,10-methenyltetrahydrofolate + H2O = (6R)-10-formyltetrahydrofolate + H(+). The protein operates within one-carbon metabolism; tetrahydrofolate interconversion. In terms of biological role, catalyzes the oxidation of 5,10-methylenetetrahydrofolate to 5,10-methenyltetrahydrofolate and then the hydrolysis of 5,10-methenyltetrahydrofolate to 10-formyltetrahydrofolate. This chain is Bifunctional protein FolD, found in Mycoplasma mycoides subsp. mycoides SC (strain CCUG 32753 / NCTC 10114 / PG1).